The sequence spans 255 residues: Triosephosphate isomerase (255 aa).

9–11 (NWK) serves as a coordination point for substrate. Residue His95 is the Electrophile of the active site. Residue Glu167 is the Proton acceptor of the active site. Substrate is bound by residues Gly173, Ser212, and 233–234 (GG).

This sequence belongs to the triosephosphate isomerase family. Homodimer.

The protein resides in the cytoplasm. It carries out the reaction D-glyceraldehyde 3-phosphate = dihydroxyacetone phosphate. Its pathway is carbohydrate biosynthesis; gluconeogenesis. The protein operates within carbohydrate degradation; glycolysis; D-glyceraldehyde 3-phosphate from glycerone phosphate: step 1/1. Involved in the gluconeogenesis. Catalyzes stereospecifically the conversion of dihydroxyacetone phosphate (DHAP) to D-glyceraldehyde-3-phosphate (G3P). The protein is Triosephosphate isomerase of Serratia proteamaculans (strain 568).